A 784-amino-acid polypeptide reads, in one-letter code: Toll-like receptor 2 (784 aa).

Residues 1 to 20 (MPRALWTAWVWAVIILSTEG) form the signal peptide. Residues 21–587 (ASDQASSLSC…ARLSLSECHR (567 aa)) lie on the Extracellular side of the membrane. A disulfide bridge connects residues cysteine 30 and cysteine 36. 19 LRR repeats span residues 54–77 (VKSLDLSNNDITYVGNRDLQRCVN), 78–101 (LKTLRLGANEIHTVEEDSFFHLRN), 102–125 (LEYLDLSYNRLSNLSSSWFRSLYV), 126–150 (LKFLNLLGNLYKTLGETSLFSHLPN), 151–175 (LRTLKVGNSNSFTEIHEKDFTGLTF), 176–199 (LEELEISAQNLQIYVPKSLKSIQN), 200–223 (ISHLILHLKQPILLVDILVDIVSS), 224–250 (LDCFELRDTNLHTFHFSEASISEMSTS), 251–278 (VKKLIFRNVQFTDESFVEVVKLFNYVSG), 279–308 (ILEVEFDDCTHDGIGDFRALSLDRIRHLGN), 309–337 (VETLTIRKLHIPQFFLFHDLSSIYPLTGR), 338–361 (VKRVTIENSKVFLVPCLLSQHLKS), 362–388 (LEYLDLSENLMSEETLKNSACKDAWPF), 389–414 (LQTLVLRQNRLKSLEKTGELLLTLEN), 415–437 (LNNLDISKNNFLSMPETCQWPGK), 438–457 (MKQLNLSSTRIHSLTQCLPQ), 458–478 (TLEILDVSNNNLDSFSLILPQ), 479–500 (LKELYISRNKLKTLPDASFLPV), and 501–524 (LSVMRISRNIINTFSKEQLDSFQQ). The N-linked (GlcNAc...) asparagine glycan is linked to asparagine 114. A glycan (N-linked (GlcNAc...) asparagine) is linked at asparagine 199. Residues cysteine 353 and cysteine 382 are joined by a disulfide bond. A disulfide bridge connects residues cysteine 432 and cysteine 454. Asparagine 442 carries N-linked (GlcNAc...) asparagine glycosylation. One can recognise an LRRCT domain in the interval 525–579 (LKTLEAGGNNFICSCDFLSFTQGQQALGRVLVDWPDDYRCDSPSHVRGQRVQDAR). A helical membrane pass occupies residues 588 to 608 (AAVVSAACCALFLLLLLTGVL). Over 609–784 (CHRFHGLWYM…WLNLRAAIRS (176 aa)) the chain is Cytoplasmic. The 144-residue stretch at 639 to 782 (ICYDAFVSYS…GFWLNLRAAI (144 aa)) folds into the TIR domain. Lysine 754 is covalently cross-linked (Glycyl lysine isopeptide (Lys-Gly) (interchain with G-Cter in ubiquitin)). The ATG16L1-binding motif motif lies at 761–778 (YLEWPVDETQQEGFWLNL).

Belongs to the Toll-like receptor family. In terms of assembly, interacts with LY96, TLR1 and TLR6 (via extracellular domain). TLR2 seems to exist in heterodimers with either TLR1 or TLR6 before stimulation by the ligand. The heterodimers form bigger oligomers in response to their corresponding ligands as well as further heterotypic associations with other receptors such as CD14 and/or CD36. Binds MYD88 (via TIR domain). Interacts with TICAM1. Interacts with CNPY3. Interacts with ATG16L1. Interacts with PPP1R11. Interacts with TICAM2. Interacts with TIRAP. In terms of processing, ubiquitinated at Lys-754 by PPP1R11, leading to its degradation. Deubiquitinated by USP2. Glycosylation of Asn-442 is critical for secretion of the N-terminal ectodomain of TLR2.

The protein localises to the membrane. It is found in the cytoplasmic vesicle. Its subcellular location is the phagosome membrane. The protein resides in the membrane raft. Its function is as follows. Cooperates with LY96 to mediate the innate immune response to bacterial lipoproteins and other microbial cell wall components. Cooperates with TLR1 or TLR6 to mediate the innate immune response to bacterial lipoproteins or lipopeptides. Acts via MYD88 and TRAF6, leading to NF-kappa-B activation, cytokine secretion and the inflammatory response. May also promote apoptosis in response to lipoproteins. Forms activation clusters composed of several receptors depending on the ligand, these clusters trigger signaling from the cell surface and subsequently are targeted to the Golgi in a lipid-raft dependent pathway. Forms the cluster TLR2:TLR6:CD14:CD36 in response to diacylated lipopeptides and TLR2:TLR1:CD14 in response to triacylated lipopeptides. The protein is Toll-like receptor 2 (TLR2) of Bos taurus (Bovine).